A 546-amino-acid polypeptide reads, in one-letter code: CTP synthase (546 aa).

The interval 1–269 (MNSNTKIIFV…DAKLVELLNL (269 aa)) is amidoligase domain. S16 contacts CTP. Residue S16 participates in UTP binding. Residues 17–22 (SLGKGV) and D74 contribute to the ATP site. Residues D74 and E143 each contribute to the Mg(2+) site. Residues 150 to 152 (DIE), 190 to 195 (KTKPTQ), and K226 contribute to the CTP site. Residues 190–195 (KTKPTQ) and K226 contribute to the UTP site. Residues 294 to 546 (TIAMVGKYVS…IQAAIENSNN (253 aa)) form the Glutamine amidotransferase type-1 domain. L-glutamine is bound at residue G356. C383 functions as the Nucleophile; for glutamine hydrolysis in the catalytic mechanism. Residues 384–387 (LGMQ), E407, and R474 contribute to the L-glutamine site. Residues H519 and E521 contribute to the active site.

This sequence belongs to the CTP synthase family. As to quaternary structure, homotetramer.

The enzyme catalyses UTP + L-glutamine + ATP + H2O = CTP + L-glutamate + ADP + phosphate + 2 H(+). The catalysed reaction is L-glutamine + H2O = L-glutamate + NH4(+). It carries out the reaction UTP + NH4(+) + ATP = CTP + ADP + phosphate + 2 H(+). It functions in the pathway pyrimidine metabolism; CTP biosynthesis via de novo pathway; CTP from UDP: step 2/2. Its activity is regulated as follows. Allosterically activated by GTP, when glutamine is the substrate; GTP has no effect on the reaction when ammonia is the substrate. The allosteric effector GTP functions by stabilizing the protein conformation that binds the tetrahedral intermediate(s) formed during glutamine hydrolysis. Inhibited by the product CTP, via allosteric rather than competitive inhibition. Catalyzes the ATP-dependent amination of UTP to CTP with either L-glutamine or ammonia as the source of nitrogen. Regulates intracellular CTP levels through interactions with the four ribonucleotide triphosphates. The polypeptide is CTP synthase (Francisella tularensis subsp. tularensis (strain FSC 198)).